Consider the following 172-residue polypeptide: Small ribosomal subunit protein bS6 (172 aa).

Residues 100-172 are disordered; the sequence is LPAKRVVKTS…ENKEIEKKED (73 aa). Positions 107–172 are enriched in basic and acidic residues; that stretch reads KTSEKNVKED…ENKEIEKKED (66 aa).

It belongs to the bacterial ribosomal protein bS6 family.

Binds together with bS18 to 16S ribosomal RNA. This chain is Small ribosomal subunit protein bS6, found in Prochlorococcus marinus (strain MIT 9211).